Reading from the N-terminus, the 61-residue chain is Large ribosomal subunit protein uL30 (61 aa).

This sequence belongs to the universal ribosomal protein uL30 family. Part of the 50S ribosomal subunit.

This chain is Large ribosomal subunit protein uL30, found in Thermosipho melanesiensis (strain DSM 12029 / CIP 104789 / BI429).